The following is a 373-amino-acid chain: S-adenosylmethionine:tRNA ribosyltransferase-isomerase (373 aa).

It belongs to the QueA family. As to quaternary structure, monomer.

Its subcellular location is the cytoplasm. It catalyses the reaction 7-aminomethyl-7-carbaguanosine(34) in tRNA + S-adenosyl-L-methionine = epoxyqueuosine(34) in tRNA + adenine + L-methionine + 2 H(+). Its pathway is tRNA modification; tRNA-queuosine biosynthesis. Its function is as follows. Transfers and isomerizes the ribose moiety from AdoMet to the 7-aminomethyl group of 7-deazaguanine (preQ1-tRNA) to give epoxyqueuosine (oQ-tRNA). This Caulobacter sp. (strain K31) protein is S-adenosylmethionine:tRNA ribosyltransferase-isomerase.